The primary structure comprises 312 residues: Pyrimidine-specific ribonucleoside hydrolase RihA (312 aa).

Residue His-240 is part of the active site.

Belongs to the IUNH family. RihA subfamily.

Hydrolyzes cytidine or uridine to ribose and cytosine or uracil, respectively. In Citrobacter koseri (strain ATCC BAA-895 / CDC 4225-83 / SGSC4696), this protein is Pyrimidine-specific ribonucleoside hydrolase RihA.